The primary structure comprises 2067 residues: MEVFVFGDQSTRFAPPLKDLLLKGNSPYLTHFVKQVHALLRREISSLPAVQQKLFPNFADIQELVSKSDWGSGNPALTSALACFYHLCSFIHFYDGQGRTFPSENSRIIGLCVGSLAAAAVSCSTSLSELVSAGVDAVRVALHVGLRVWRTTSLFDVPDRPSATWSIIVPEAVLPRESAQDRLDSFIIEMGLARSSVPYISSVAHHNMTISGPPSVLEKFIHSISTSPKDSLPVPIYAPYHASHLYSMDDVDEVLSLSAPSFASESIIPLISSSSGDELQPLKYADLLRCCVSDMLIQPLDLTKVSQAVAQLLEVSSSTRAIIKPIATSVSNSLVSALEPTLAERCAVDNSMGPKASTSHSSAETQTESSSKNSKIAIVAMSGRFPDAADLGEFWDLLYKGRDVHRQIPEDRFNAELHYDATGRRKNTSKVMNGCFIKEPGLFDARFFNMSPKEAEQSDPGQRMALETAYEALEMAGIVPDRTPSTQRDRVGVFYGMTSDDWREVNSGQNVDTYFIPGGNRAFTPGRLNYFFKFSGPSASVDTACSSSLAALHLACNSLWRNDCDTAIAGGTNVMTNPDNFAGLDRGHFLSRTGNCNTFDDGADGYCRADGVGTIILKRLEDAEADNDPILGVILGAYTNHSAEAVSITRPHAGAQEYIFSKLLRESGTDPYNVSYIEMHGTGTQAGDATEMTSVLKTFAPTSGFGGRLPHQNLHLGSVKANVGHGESASGIIALIKTLLMMEKNMIPPHCGIKTKINHHFPTDLTQRNVHIAKVPTSWTRSGQANPRIAFVNNFSAAGGNSAVLLQDAPRPSVVSDVTDPRSSHVVTMSARSADSLRKNLANLKELVEGQGDSEVDFLSKLSYTTTARRMHHQFRASVTAQTREQLLKGLDSAIERQDVKRIPAAAPSVGFVFSGQGAQYRGMGKEYFTSFTAFRSEIMSYDSIAQAQGFPSILPLIRGEVEADSLSPVEIQLGLTCLQMALAKLWKSFGVEPGFVLGHSLGHYAALHVAGVLSANDTIYLTGIRAQLLVDKCQAGTHSMLAVRASLLQIQQFLDANIHEVACVNGPREVVISGRVADIDQLVGLLSADNIKATRVKVPFAFHSAQVDPILSDLDTAASRVTFHSPQIPVLCALDSSVISPGNHGVIGPLHLQRHCRETVNFEGALHAAEREKIINKTSTLWIEIGPHVVCSTFLKSSLGPSTPTIASLRRNDDCWKVLADGLSSLYSSGLTIDWNEYHRDFKASHQVLRLPCYSWEHKNYWIQYKYDWSLTKGDPPIAPNSSVEAVSALSTPSVQKILQETSLDQVLTIVAETDLASPLLSEVAQGHRVNGVKVCTSSVYADVGLTLGKYILDNYRTDLEGYAVDVHGIEVHKPLLLKEDMNGTPQATPFRIEVRYPIQSTTALMSISTTGPNGQHIKHANCELRLEHPSQWEAEWDRQAYLINRSVNYLLQRSAQGLDSMLATGMVYKVFSSLVDYADGYKGLQEVVLHSQELEGTAKVRFQTPSGGFVCNPMWIDSCGQTTGFMMNCHQTTPNDYVYVNHGWKSMRLAKAFREDGTYRTYIRMRPIDSTKFAGDLYILDEDDTVVGVYGDITFQGLPRRVLNTVLPSANAVPVDAPMGRRDVPPSRMDVPPVRSGEGPPTSAPTQQAIALPFAADTSMDSRLRPLLRILSEEIGLGLDVLSDDELDFADHGVDSLLSLTITGRMREELGLDVESTAFMNCPTLGSFKLFLGLVDQDNKSSSGSDGSGRSSPAPGIESGATTPPMSEEDQDKIVSSHSLHQFQASSTLLQGSPSKARSTLFLLPDGSGSATSYASLPPISPDGDVAVYGLNCPWLKDASYLVEFGLKGLTELYVNEILRRKPQGPYNLGGWSAGGICAYEAALILTRAGHQVDRLILIDSPNPVGLEKLPPRLYDFLNSQNVFGSDNPHSTAGTSVKAPEWLLAHFLAFIDALDAYVAVPWDSGLVGLASPLPAPPQTYMLWAEDGVCKDSDSARPEYRDDDPREMRWLLENRTNFGPNGWEALLGGKEGLFMDRIAEANHFSMLKRGRNAEYVSAFLARALDN.

Residues phenylalanine 4–histidine 241 form an N-terminal acylcarrier protein transacylase (SAT) domain region. A disordered region spans residues asparagine 350–asparagine 373. Over residues alanine 356–asparagine 373 the composition is skewed to polar residues. A Ketosynthase family 3 (KS3) domain is found at asparagine 373–aspartate 808. Catalysis depends on for beta-ketoacyl synthase activity residues cysteine 545, histidine 680, and histidine 725. The malonyl-CoA:ACP transacylase (MAT) domain stretch occupies residues phenylalanine 912–serine 1199. Catalysis depends on serine 1001, which acts as the For acyl/malonyl transferase activity. The tract at residues glutamine 1297–glutamine 1433 is N-terminal hotdog fold. The 310-residue stretch at glutamine 1297 to asparagine 1606 folds into the PKS/mFAS DH domain. Residue histidine 1329 is the Proton acceptor; for dehydratase activity of the active site. Residues histidine 1329–valine 1604 form a product template (PT) domain region. The tract at residues leucine 1460–asparagine 1606 is C-terminal hotdog fold. Aspartate 1519 (proton donor; for dehydratase activity) is an active-site residue. The disordered stretch occupies residues alanine 1619–threonine 1648. Residues threonine 1660–aspartate 1738 enclose the Carrier domain. Serine 1698 is subject to O-(pantetheine 4'-phosphoryl)serine. Residues lysine 1742–serine 1779 form a disordered region. The span at serine 1743–serine 1754 shows a compositional bias: low complexity. Residues serine 1781–leucine 2065 are claisen cyclase domain. The active-site For Claisen cyclase activity is the serine 1875.

The enzyme catalyses 6 malonyl-CoA + acetyl-CoA + 6 H(+) = naphtopyrone YWA1 + 6 CO2 + 7 CoA + H2O. Its pathway is pigment biosynthesis. Functionally, non-reducing polyketide synthase; part of the gene cluster that mediates the biosynthesis of aurofusarin, a red mycelium pigment which is acting as a mycotoxin. The first step is performed by the polyketide synthase which condenses one acetyl-CoA and 6 malonyl-CoA units to form the first intermediate, the cyclic heptaketide and yellow pigment YWA1. The C2 hydroxyl group in the pyrone ring of YWA1 is probably formed during ring closure by an aldol-type cyclization reaction. The dehydratase aurZ then acts as the first tailoring enzyme in the aurofusarin biosynthetic pathway by converting YWA1 to nor-rubrofusarin. Nor-rubrofusarin is then methylated to rubrofusarin by the O-methyltransferase aurJ. Rubrofusarin is then transported across the plasma membrane by the rubrofusarin-specific pump aurT for further enzymatic processing by the extracellular complex composed of GIP1, aurF, aurO and aurS to yield aurofusarin. The chain is Non-reducing polyketide synthase PKS12 from Gibberella zeae (strain ATCC MYA-4620 / CBS 123657 / FGSC 9075 / NRRL 31084 / PH-1) (Wheat head blight fungus).